A 252-amino-acid polypeptide reads, in one-letter code: Acetoacetate decarboxylase (252 aa).

K116 (schiff-base intermediate with acetoacetate) is an active-site residue.

This sequence belongs to the ADC family.

It catalyses the reaction acetoacetate + H(+) = acetone + CO2. In terms of biological role, catalyzes the conversion of acetoacetate to acetone and carbon dioxide. The polypeptide is Acetoacetate decarboxylase (Paraburkholderia xenovorans (strain LB400)).